Reading from the N-terminus, the 414-residue chain is F-box protein At3g47030 (414 aa).

Positions 1–24 (MSGMLGLSAVMGKRPKQQVTARPR) are disordered. Residues 28–77 (IEKPEEIPDDLLIDVFSRLSIEDVARCRCLSRFWSSILRRRYFTELFHKM) form the F-box domain.

This is F-box protein At3g47030 from Arabidopsis thaliana (Mouse-ear cress).